Here is a 90-residue protein sequence, read N- to C-terminus: Probable Fe(2+)-trafficking protein (90 aa).

This sequence belongs to the Fe(2+)-trafficking protein family.

Could be a mediator in iron transactions between iron acquisition and iron-requiring processes, such as synthesis and/or repair of Fe-S clusters in biosynthetic enzymes. This is Probable Fe(2+)-trafficking protein from Herminiimonas arsenicoxydans.